We begin with the raw amino-acid sequence, 339 residues long: Phosphate acyltransferase (339 aa).

It belongs to the PlsX family. Homodimer. Probably interacts with PlsY.

Its subcellular location is the cytoplasm. It catalyses the reaction a fatty acyl-[ACP] + phosphate = an acyl phosphate + holo-[ACP]. It functions in the pathway lipid metabolism; phospholipid metabolism. Its function is as follows. Catalyzes the reversible formation of acyl-phosphate (acyl-PO(4)) from acyl-[acyl-carrier-protein] (acyl-ACP). This enzyme utilizes acyl-ACP as fatty acyl donor, but not acyl-CoA. This chain is Phosphate acyltransferase, found in Aeromonas salmonicida (strain A449).